Here is a 119-residue protein sequence, read N- to C-terminus: MARVKRGVTAHAKHKKVYKAAKGFRGRRKNTIRAAKAAVDKAGQYAFRDRKRKKRTFRALWIQRINAAVRPLGMTYSVFINGLAKSGVIVDRKVLSDLAIHEPVAFQAIAEKAKAALAA.

The protein belongs to the bacterial ribosomal protein bL20 family.

In terms of biological role, binds directly to 23S ribosomal RNA and is necessary for the in vitro assembly process of the 50S ribosomal subunit. It is not involved in the protein synthesizing functions of that subunit. This is Large ribosomal subunit protein bL20 from Rhodopseudomonas palustris (strain BisA53).